The primary structure comprises 214 residues: Large ribosomal subunit protein uL3 (214 aa).

Residues 133 to 155 (ATHGNSRSHRVPGSTGQCQSPGR) form a disordered region. The residue at position 151 (glutamine 151) is an N5-methylglutamine.

The protein belongs to the universal ribosomal protein uL3 family. In terms of assembly, part of the 50S ribosomal subunit. Forms a cluster with proteins L14 and L19. In terms of processing, methylated by PrmB.

Its function is as follows. One of the primary rRNA binding proteins, it binds directly near the 3'-end of the 23S rRNA, where it nucleates assembly of the 50S subunit. The chain is Large ribosomal subunit protein uL3 from Cellvibrio japonicus (strain Ueda107) (Pseudomonas fluorescens subsp. cellulosa).